We begin with the raw amino-acid sequence, 282 residues long: ATP synthase gamma chain (282 aa).

The protein belongs to the ATPase gamma chain family. F-type ATPases have 2 components, CF(1) - the catalytic core - and CF(0) - the membrane proton channel. CF(1) has five subunits: alpha(3), beta(3), gamma(1), delta(1), epsilon(1). CF(0) has three main subunits: a, b and c.

It localises to the cell membrane. Functionally, produces ATP from ADP in the presence of a proton gradient across the membrane. The gamma chain is believed to be important in regulating ATPase activity and the flow of protons through the CF(0) complex. This is ATP synthase gamma chain from Clostridium botulinum (strain ATCC 19397 / Type A).